A 669-amino-acid polypeptide reads, in one-letter code: Pre-mRNA-processing factor 39 (669 aa).

A compositionally biased stretch (basic and acidic residues) spans 1 to 10 (MQNSHMDEYR). Positions 1–23 (MQNSHMDEYRNSSNGSTGNSSEV) are disordered. A compositionally biased stretch (low complexity) spans 11-23 (NSSNGSTGNSSEV). S44 is modified (phosphoserine). 7 HAT repeats span residues 109 to 141 (NHLM…LEKR), 143 to 175 (DNIK…FLKE), 183 to 218 (ETNN…WENE), 220 to 253 (GNLR…HVQN), 333 to 365 (TFEE…FEIE), 367 to 399 (GTHE…YMEN), and 404 to 436 (GVRH…QQGN). The span at 599-624 (KEQDSLKRKAENGSEEPEEKKAHTED) shows a compositional bias: basic and acidic residues. Positions 599–634 (KEQDSLKRKAENGSEEPEEKKAHTEDTTSSSTQMID) are disordered. Polar residues predominate over residues 625-634 (TTSSSTQMID).

The protein belongs to the PRP39 family.

It is found in the nucleus. Its function is as follows. Involved in pre-mRNA splicing. This chain is Pre-mRNA-processing factor 39 (PRPF39), found in Homo sapiens (Human).